We begin with the raw amino-acid sequence, 232 residues long: Urease accessory protein UreF (232 aa).

This sequence belongs to the UreF family. In terms of assembly, ureD, UreF and UreG form a complex that acts as a GTP-hydrolysis-dependent molecular chaperone, activating the urease apoprotein by helping to assemble the nickel containing metallocenter of UreC. The UreE protein probably delivers the nickel.

Its subcellular location is the cytoplasm. Required for maturation of urease via the functional incorporation of the urease nickel metallocenter. This chain is Urease accessory protein UreF, found in Trichodesmium erythraeum (strain IMS101).